The sequence spans 565 residues: Deoxyribodipyrimidine photo-lyase, mitochondrial (565 aa).

The Photolyase/cryptochrome alpha/beta domain maps to 75–226 (STVMHWFRND…QLKYYHDSCI (152 aa)). FAD is bound by residues Y326 and 338-342 (TSGLS). 2 interaction with DNA regions span residues 384–391 (EVAWRDFY) and 451–452 (NR). FAD is bound at residue 482-484 (DGD). Q514 provides a ligand contact to DNA.

This sequence belongs to the DNA photolyase class-1 family. Monomer. Requires FAD as cofactor. The cofactor is (6R)-5,10-methylene-5,6,7,8-tetrahydrofolate.

Its subcellular location is the nucleus. The protein localises to the mitochondrion. The enzyme catalyses cyclobutadipyrimidine (in DNA) = 2 pyrimidine residues (in DNA).. In terms of biological role, involved in repair of UV radiation-induced DNA damage. Catalyzes the light-dependent monomerization (300-600 nm) of cyclobutyl pyrimidine dimers (in cis-syn configuration), which are formed between adjacent bases on the same DNA strand upon exposure to ultraviolet radiation. The chain is Deoxyribodipyrimidine photo-lyase, mitochondrial (PHR1) from Saccharomyces cerevisiae (strain ATCC 204508 / S288c) (Baker's yeast).